Consider the following 92-residue polypeptide: Conotoxin Ac8.1 (92 aa).

An N-terminal signal peptide occupies residues 1–19 (LKMGAMFVLLLLFTLASSQ). Positions 20 to 44 (QEGDVQARKTSLKSDFYRALRQYDR) are excised as a propeptide. Gln45 is subject to Pyrrolidone carboxylic acid.

It belongs to the conotoxin S superfamily. Post-translationally, contains 5 disulfide bonds. In terms of tissue distribution, expressed by the venom duct.

The protein localises to the secreted. This Conus achatinus (Little frog cone) protein is Conotoxin Ac8.1.